We begin with the raw amino-acid sequence, 550 residues long: Chaperonin GroEL (550 aa).

ATP is bound by residues 30-33 (TLGP), Lys-51, 87-91 (DGTTT), Gly-415, 481-483 (NAA), and Asp-497.

This sequence belongs to the chaperonin (HSP60) family. As to quaternary structure, forms a cylinder of 14 subunits composed of two heptameric rings stacked back-to-back. Interacts with the co-chaperonin GroES.

Its subcellular location is the cytoplasm. The catalysed reaction is ATP + H2O + a folded polypeptide = ADP + phosphate + an unfolded polypeptide.. Functionally, together with its co-chaperonin GroES, plays an essential role in assisting protein folding. The GroEL-GroES system forms a nano-cage that allows encapsulation of the non-native substrate proteins and provides a physical environment optimized to promote and accelerate protein folding. This is Chaperonin GroEL from Photobacterium profundum (strain SS9).